We begin with the raw amino-acid sequence, 319 residues long: Acetyl-coenzyme A carboxylase carboxyl transferase subunit alpha (319 aa).

The 255-residue stretch at 38 to 292 (ALDKKAETLL…GKAIEMMLKE (255 aa)) folds into the CoA carboxyltransferase C-terminal domain.

This sequence belongs to the AccA family. In terms of assembly, acetyl-CoA carboxylase is a heterohexamer composed of biotin carboxyl carrier protein (AccB), biotin carboxylase (AccC) and two subunits each of ACCase subunit alpha (AccA) and ACCase subunit beta (AccD).

It localises to the cytoplasm. It catalyses the reaction N(6)-carboxybiotinyl-L-lysyl-[protein] + acetyl-CoA = N(6)-biotinyl-L-lysyl-[protein] + malonyl-CoA. It functions in the pathway lipid metabolism; malonyl-CoA biosynthesis; malonyl-CoA from acetyl-CoA: step 1/1. Its function is as follows. Component of the acetyl coenzyme A carboxylase (ACC) complex. First, biotin carboxylase catalyzes the carboxylation of biotin on its carrier protein (BCCP) and then the CO(2) group is transferred by the carboxyltransferase to acetyl-CoA to form malonyl-CoA. This Cereibacter sphaeroides (strain ATCC 17029 / ATH 2.4.9) (Rhodobacter sphaeroides) protein is Acetyl-coenzyme A carboxylase carboxyl transferase subunit alpha.